A 147-amino-acid chain; its full sequence is Protein phosphatase 1 regulatory subunit 14A (147 aa).

Basic residues predominate over residues 1–11 (MAAQRLGKRVL). The interval 1 to 36 (MAAQRLGKRVLSKLQSPSRARGPGGSPSGLQKRHAR) is disordered. Phosphoserine is present on serine 26. Residues 35 to 120 (ARVTVKYDRR…LLAKLRGLHK (86 aa)) form an inhibitory region. At threonine 38 the chain carries Phosphothreonine; by PKC. The interval 118 to 147 (LHKQPGFPQPSPSDDPSLSPRQDRAHTAPP) is disordered. Residues serine 128, serine 134, and serine 136 each carry the phosphoserine modification. Residues 138-147 (RQDRAHTAPP) show a composition bias toward basic and acidic residues.

This sequence belongs to the PP1 inhibitor family.

It is found in the cytoplasm. Functionally, inhibitor of PPP1CA. Has over 1000-fold higher inhibitory activity when phosphorylated, creating a molecular switch for regulating the phosphorylation status of PPP1CA substrates and smooth muscle contraction. The protein is Protein phosphatase 1 regulatory subunit 14A (Ppp1r14a) of Mus musculus (Mouse).